The primary structure comprises 279 residues: Phosphatidylglycerol--prolipoprotein diacylglyceryl transferase (279 aa).

A run of 3 helical transmembrane segments spans residues L18–A38, I55–Q75, and I89–I109. R137 is a binding site for a 1,2-diacyl-sn-glycero-3-phospho-(1'-sn-glycerol). 2 helical membrane passes run L203–G223 and I235–Y255.

This sequence belongs to the Lgt family.

The protein resides in the cell membrane. The enzyme catalyses L-cysteinyl-[prolipoprotein] + a 1,2-diacyl-sn-glycero-3-phospho-(1'-sn-glycerol) = an S-1,2-diacyl-sn-glyceryl-L-cysteinyl-[prolipoprotein] + sn-glycerol 1-phosphate + H(+). It participates in protein modification; lipoprotein biosynthesis (diacylglyceryl transfer). Catalyzes the transfer of the diacylglyceryl group from phosphatidylglycerol to the sulfhydryl group of the N-terminal cysteine of a prolipoprotein, the first step in the formation of mature lipoproteins. The chain is Phosphatidylglycerol--prolipoprotein diacylglyceryl transferase from Staphylococcus aureus (strain MSSA476).